The primary structure comprises 352 residues: UDP-3-O-acylglucosamine N-acyltransferase (352 aa).

The Proton acceptor role is filled by histidine 242.

The protein belongs to the transferase hexapeptide repeat family. LpxD subfamily. In terms of assembly, homotrimer.

It catalyses the reaction a UDP-3-O-[(3R)-3-hydroxyacyl]-alpha-D-glucosamine + a (3R)-hydroxyacyl-[ACP] = a UDP-2-N,3-O-bis[(3R)-3-hydroxyacyl]-alpha-D-glucosamine + holo-[ACP] + H(+). The protein operates within bacterial outer membrane biogenesis; LPS lipid A biosynthesis. Its function is as follows. Catalyzes the N-acylation of UDP-3-O-acylglucosamine using 3-hydroxyacyl-ACP as the acyl donor. Is involved in the biosynthesis of lipid A, a phosphorylated glycolipid that anchors the lipopolysaccharide to the outer membrane of the cell. This is UDP-3-O-acylglucosamine N-acyltransferase from Alkalilimnicola ehrlichii (strain ATCC BAA-1101 / DSM 17681 / MLHE-1).